We begin with the raw amino-acid sequence, 496 residues long: Probable CtpA-like serine protease (496 aa).

Residues 1–26 (MRKCFFMSHNPEEKQSNLDSNHKNES) form a disordered region. Residues 10 to 25 (NPEEKQSNLDSNHKNE) are compositionally biased toward basic and acidic residues. A helical membrane pass occupies residues 39 to 59 (FILLLLGVVIITAGITVAATI). A PDZ domain is found at 124–206 (TKSFNEDVSG…TTVKLTIKRG (83 aa)). Residues Ser329, Asp340, and Lys354 each act as charge relay system in the active site.

The protein belongs to the peptidase S41A family.

The protein resides in the cell membrane. This Staphylococcus haemolyticus (strain JCSC1435) protein is Probable CtpA-like serine protease.